The chain runs to 321 residues: Protein BIG GRAIN 1-like E (321 aa).

The segment at 134–217 is disordered; the sequence is AGSKKNKSKS…PPPYLNTPTK (84 aa). Residues 135 to 147 are compositionally biased toward basic residues; it reads GSKKNKSKSKSKT. The span at 172-206 shows a compositional bias: low complexity; that stretch reads ISHFFSSSRSTSTTTTTTASSSSKSLISSSSSGFR.

Belongs to the BIG GRAIN 1 (BG1) plant protein family.

Its subcellular location is the cell membrane. Its function is as follows. Involved in auxin transport. Regulator of the auxin signaling pathway. This is Protein BIG GRAIN 1-like E from Arabidopsis thaliana (Mouse-ear cress).